The sequence spans 133 residues: Fatty acid-binding protein, heart (133 aa).

An N-acetylalanine modification is found at Ala2. Thr8 carries the phosphothreonine modification. A Phosphotyrosine; by Tyr-kinases modification is found at Tyr20. Ser23 is modified (phosphoserine). Position 30 is a phosphothreonine (Thr30). Position 83 is a phosphoserine (Ser83). 127 to 129 (RTY) serves as a coordination point for (9Z)-octadecenoate. A hexadecanoate-binding site is contributed by 127–129 (RTY). Octadecanoate is bound at residue 127-129 (RTY).

In terms of tissue distribution, heart, but also skeletal muscle, kidney, brain and mammary gland.

The protein localises to the cytoplasm. Its function is as follows. FABPs are thought to play a role in the intracellular transport of long-chain fatty acids and their acyl-CoA esters. The chain is Fatty acid-binding protein, heart (Fabp3) from Rattus norvegicus (Rat).